The sequence spans 138 residues: Chorion protein S16 (138 aa).

Residues 1–20 (MSATLRLLCLMACCVALAVA) form the signal peptide.

Belongs to the chorion protein S16 family.

It localises to the secreted. Its function is as follows. Chorion membrane (egg shell) protein; plays a role in protecting the egg from the environment. This Drosophila melanogaster (Fruit fly) protein is Chorion protein S16 (Cp16).